A 326-amino-acid chain; its full sequence is Beta-ketoacyl-[acyl-carrier-protein] synthase III (326 aa).

Residues Cys112 and His251 contribute to the active site. An ACP-binding region spans residues 252–256 (QANSR). Residue Asn281 is part of the active site.

Belongs to the thiolase-like superfamily. FabH family. Homodimer.

It is found in the cytoplasm. It carries out the reaction malonyl-[ACP] + acetyl-CoA + H(+) = 3-oxobutanoyl-[ACP] + CO2 + CoA. The protein operates within lipid metabolism; fatty acid biosynthesis. Functionally, catalyzes the condensation reaction of fatty acid synthesis by the addition to an acyl acceptor of two carbons from malonyl-ACP. Catalyzes the first condensation reaction which initiates fatty acid synthesis and may therefore play a role in governing the total rate of fatty acid production. Possesses both acetoacetyl-ACP synthase and acetyl transacylase activities. Its substrate specificity determines the biosynthesis of branched-chain and/or straight-chain of fatty acids. This is Beta-ketoacyl-[acyl-carrier-protein] synthase III from Clostridium botulinum (strain Langeland / NCTC 10281 / Type F).